We begin with the raw amino-acid sequence, 464 residues long: Protein FAM90A8 (464 aa).

Disordered stretches follow at residues 1 to 42, 69 to 389, and 415 to 437; these read MMAR…DPRL, VPAT…HDGA, and HSPE…SEAP. Composition is skewed to basic and acidic residues over residues 74-89 and 97-114; these read GKKE…KPRG and NKDK…DPQR. Positions 180 to 197 are enriched in low complexity; that stretch reads LASLSPLRKASLSSSSSL.

This sequence belongs to the FAM90 family.

The chain is Protein FAM90A8 (FAM90A8) from Homo sapiens (Human).